Here is a 700-residue protein sequence, read N- to C-terminus: DNA ligase (700 aa).

NAD(+) is bound by residues 61–65 (DAEYD), 110–111 (SL), and Glu-141. Lys-143 (N6-AMP-lysine intermediate) is an active-site residue. 4 residues coordinate NAD(+): Arg-164, Glu-202, Lys-321, and Lys-345. Residues Cys-439, Cys-442, Cys-457, and Cys-462 each contribute to the Zn(2+) site. The region spanning 619–700 (AVSNKLAGLQ…EFLRLLEDSK (82 aa)) is the BRCT domain.

This sequence belongs to the NAD-dependent DNA ligase family. LigA subfamily. The cofactor is Mg(2+). It depends on Mn(2+) as a cofactor.

It carries out the reaction NAD(+) + (deoxyribonucleotide)n-3'-hydroxyl + 5'-phospho-(deoxyribonucleotide)m = (deoxyribonucleotide)n+m + AMP + beta-nicotinamide D-nucleotide.. Functionally, DNA ligase that catalyzes the formation of phosphodiester linkages between 5'-phosphoryl and 3'-hydroxyl groups in double-stranded DNA using NAD as a coenzyme and as the energy source for the reaction. It is essential for DNA replication and repair of damaged DNA. In Hydrogenobaculum sp. (strain Y04AAS1), this protein is DNA ligase.